Here is a 208-residue protein sequence, read N- to C-terminus: Outer-membrane lipoprotein carrier protein (208 aa).

The signal sequence occupies residues M1 to A22.

Belongs to the LolA family. As to quaternary structure, monomer.

It localises to the periplasm. Functionally, participates in the translocation of lipoproteins from the inner membrane to the outer membrane. Only forms a complex with a lipoprotein if the residue after the N-terminal Cys is not an aspartate (The Asp acts as a targeting signal to indicate that the lipoprotein should stay in the inner membrane). The chain is Outer-membrane lipoprotein carrier protein from Shewanella baltica (strain OS195).